Consider the following 55-residue polypeptide: Putative virulence-regulating protein PA2146 (55 aa).

The disordered stretch occupies residues 1–55 (MAQHQGGKGNFAEDPKRASEAGKKGGQASGGNFKNDPQRASEAGKKGGQRSHGGN). Basic and acidic residues-rich tracts occupy residues 11 to 23 (FAED…EAGK) and 36 to 45 (DPQRASEAGK).

It belongs to the con-10 family.

May be involved in the regulation of the production of pyocyanine, one of the major virulence factors secreted by P.aeruginosa, and other virulence factors. This Pseudomonas aeruginosa (strain ATCC 15692 / DSM 22644 / CIP 104116 / JCM 14847 / LMG 12228 / 1C / PRS 101 / PAO1) protein is Putative virulence-regulating protein PA2146.